We begin with the raw amino-acid sequence, 157 residues long: Small ribosomal subunit protein uS7 (157 aa).

It belongs to the universal ribosomal protein uS7 family. In terms of assembly, part of the 30S ribosomal subunit. Contacts proteins S9 and S11.

Its function is as follows. One of the primary rRNA binding proteins, it binds directly to 16S rRNA where it nucleates assembly of the head domain of the 30S subunit. Is located at the subunit interface close to the decoding center, probably blocks exit of the E-site tRNA. This is Small ribosomal subunit protein uS7 from Acidovorax ebreus (strain TPSY) (Diaphorobacter sp. (strain TPSY)).